Consider the following 214-residue polypeptide: Rac-like GTP-binding protein 3 (214 aa).

Residue 15-22 (GDGAVGKT) coordinates GTP. The short motif at 37–45 (YIPTVFDNF) is the Effector region element. Residues 62-66 (DTAGQ) and 120-123 (TKLD) each bind GTP.

This sequence belongs to the small GTPase superfamily. Rho family. Post-translationally, may be palmitoylated.

The protein localises to the cytoplasm. It is found in the membrane. Functionally, inactive GDP-bound Rho GTPases reside in the cytosol, are found in a complex with Rho GDP-dissociation inhibitors (Rho GDIs), and are released from the GDI protein in order to translocate to membranes upon activation. In Oryza sativa subsp. japonica (Rice), this protein is Rac-like GTP-binding protein 3 (RAC3).